The chain runs to 316 residues: Transaldolase (316 aa).

Lys132 acts as the Schiff-base intermediate with substrate in catalysis.

The protein belongs to the transaldolase family. Type 1 subfamily. As to quaternary structure, homodimer.

It localises to the cytoplasm. The enzyme catalyses D-sedoheptulose 7-phosphate + D-glyceraldehyde 3-phosphate = D-erythrose 4-phosphate + beta-D-fructose 6-phosphate. It functions in the pathway carbohydrate degradation; pentose phosphate pathway; D-glyceraldehyde 3-phosphate and beta-D-fructose 6-phosphate from D-ribose 5-phosphate and D-xylulose 5-phosphate (non-oxidative stage): step 2/3. Its function is as follows. Transaldolase is important for the balance of metabolites in the pentose-phosphate pathway. The polypeptide is Transaldolase (Vibrio cholerae serotype O1 (strain ATCC 39541 / Classical Ogawa 395 / O395)).